Here is a 218-residue protein sequence, read N- to C-terminus: Ribose-5-phosphate isomerase A (218 aa).

Residues 28 to 31, 81 to 84, and 94 to 97 each bind substrate; these read TGST, DGAD, and KGGG. The active-site Proton acceptor is glutamate 103. Position 121 (lysine 121) interacts with substrate.

Belongs to the ribose 5-phosphate isomerase family. In terms of assembly, homodimer.

The enzyme catalyses aldehydo-D-ribose 5-phosphate = D-ribulose 5-phosphate. The protein operates within carbohydrate degradation; pentose phosphate pathway; D-ribose 5-phosphate from D-ribulose 5-phosphate (non-oxidative stage): step 1/1. Its function is as follows. Catalyzes the reversible conversion of ribose-5-phosphate to ribulose 5-phosphate. In Aliivibrio salmonicida (strain LFI1238) (Vibrio salmonicida (strain LFI1238)), this protein is Ribose-5-phosphate isomerase A.